Reading from the N-terminus, the 140-residue chain is UPF0306 protein YhbP (140 aa).

The protein belongs to the UPF0306 family.

The sequence is that of UPF0306 protein YhbP from Escherichia coli O6:H1 (strain CFT073 / ATCC 700928 / UPEC).